The following is a 564-amino-acid chain: Potassium-transporting ATPase potassium-binding subunit (564 aa).

Helical transmembrane passes span 4-24 (YDYW…PFLG), 67-87 (TLAL…ILLF), 135-155 (VGLT…LVAL), 179-199 (LYGL…QGVP), 258-278 (FEVA…GHYV), 286-306 (AIIG…LWAE), 382-402 (AGLY…GLMI), 420-440 (LLVV…AIAA), 487-507 (LMLG…VLAL), and 528-548 (GPLF…LTFL).

This sequence belongs to the KdpA family. The system is composed of three essential subunits: KdpA, KdpB and KdpC.

The protein localises to the cell inner membrane. In terms of biological role, part of the high-affinity ATP-driven potassium transport (or Kdp) system, which catalyzes the hydrolysis of ATP coupled with the electrogenic transport of potassium into the cytoplasm. This subunit binds the periplasmic potassium ions and delivers the ions to the membrane domain of KdpB through an intramembrane tunnel. The chain is Potassium-transporting ATPase potassium-binding subunit from Pseudomonas fluorescens (strain Pf0-1).